A 916-amino-acid polypeptide reads, in one-letter code: Probable dipeptidyl-aminopeptidase B (916 aa).

2 disordered regions span residues 1 to 35 (MGRT…SGLS) and 67 to 86 (DAEA…KLGS). The Cytoplasmic segment spans residues 1-92 (MGRTGDLENA…KLGSGSRTRQ (92 aa)). Low complexity predominate over residues 21-35 (TSGTSSRSSTDSGLS). Residues 93 to 113 (IFWALVILCLGGWVLALVLFL) form a helical; Signal-anchor for type II membrane protein membrane-spanning segment. Residues 114-916 (THGRASSQTA…VKRSVPAFAH (803 aa)) are Vacuolar-facing. N-linked (GlcNAc...) asparagine glycans are attached at residues Asn349 and Asn640. Ser754 serves as the catalytic Charge relay system. N-linked (GlcNAc...) asparagine glycosylation is found at Asn808 and Asn813. Catalysis depends on charge relay system residues Asp831 and His864.

This sequence belongs to the peptidase S9B family.

Its subcellular location is the vacuole membrane. The catalysed reaction is Release of an N-terminal dipeptide, Xaa-Yaa-|-Zaa-, from a polypeptide, preferentially when Yaa is Pro, provided Zaa is neither Pro nor hydroxyproline.. Functionally, type IV dipeptidyl-peptidase which removes N-terminal dipeptides sequentially from polypeptides having unsubstituted N-termini provided that the penultimate residue is proline. The polypeptide is Probable dipeptidyl-aminopeptidase B (dapB) (Aspergillus flavus (strain ATCC 200026 / FGSC A1120 / IAM 13836 / NRRL 3357 / JCM 12722 / SRRC 167)).